The primary structure comprises 218 residues: Probable nicotinate-nucleotide adenylyltransferase (218 aa).

Belongs to the NadD family.

The enzyme catalyses nicotinate beta-D-ribonucleotide + ATP + H(+) = deamido-NAD(+) + diphosphate. It participates in cofactor biosynthesis; NAD(+) biosynthesis; deamido-NAD(+) from nicotinate D-ribonucleotide: step 1/1. Its function is as follows. Catalyzes the reversible adenylation of nicotinate mononucleotide (NaMN) to nicotinic acid adenine dinucleotide (NaAD). The sequence is that of Probable nicotinate-nucleotide adenylyltransferase from Burkholderia lata (strain ATCC 17760 / DSM 23089 / LMG 22485 / NCIMB 9086 / R18194 / 383).